The following is a 185-amino-acid chain: Coordinator of PRMT5 and differentiation stimulator (185 aa).

The residue at position 1 (M1) is an N-acetylmethionine. Residues 1 to 109 (MDPPTAGAQS…MSGCLPKEQA (109 aa)) form a disordered region. Composition is skewed to basic and acidic residues over residues 42–52 (SSQEKATENAT) and 66–77 (SPAHGEGTHCEE). The residue at position 66 (S66) is a Phosphoserine. Residues 78 to 89 (EGFAEDDEDSDG) show a composition bias toward acidic residues.

Interacts with PRMT5. Interacts with histone H4; specifically interacts with the N-terminus of histone H4 but not with histone H3. Interacts with CBFB. Found in a complex with PRMT5, RUNX1 and CBFB.

It is found in the nucleus. Its function is as follows. Histone-binding protein required for histone H4 methyltransferase activity of PRMT5. Specifically required for histone H4 'Arg-3' methylation mediated by PRMT5, but not histone H3 'Arg-8' methylation, suggesting that it modulates the substrate specificity of PRMT5. Specifically interacts with the N-terminus of histone H4 but not with histone H3, suggesting that it acts by promoting the association between histone H4 and PRMT5. Involved in CCNE1 promoter repression. Plays a role in muscle cell differentiation by modulating the recruitment of PRMT5 to the promoter of genes involved in the coordination between cell cycle exit and muscle differentiation. This Bos taurus (Bovine) protein is Coordinator of PRMT5 and differentiation stimulator (COPRS).